A 400-amino-acid polypeptide reads, in one-letter code: Vitamin K-dependent protein Z (400 aa).

The N-terminal stretch at 1-23 is a signal peptide; sequence MAGCVPLLQGLVLVLALHRVEPS. A propeptide spanning residues 24–40 is cleaved from the precursor; it reads VFLPASKANDVLVRWKR. Residues 41–86 form the Gla domain; it reads AGSYLLEELFEGNLEKECYEEICVYEEAREVFENEVVTDEFWRRYK. 4-carboxyglutamate is present on residues E47, E48, E51, E55, E57, E60, E61, E66, E67, E70, E73, E75, and E80. An intrachain disulfide couples C58 to C63. EGF-like domains are found at residues 87–123 and 125–166; these read GGSPCISQPCLHNGSCQDSIWGYTCTCSPGYEGSNCE and AKNE…KQCV. Cystine bridges form between C91-C102, C96-C111, C113-C122, C129-C141, C137-C150, C152-C165, and C203-C219. S93 is a glycosylation site (O-linked (Glc...) serine). The N-linked (GlcNAc...) asparagine glycan is linked to N99. D104 carries the post-translational modification (3R)-3-hydroxyaspartate. Residues 175–400 form the Peptidase S1 domain; that stretch reads VLTSEKRAPD…YSLWFKQIMN (226 aa). Residues N225, N233, N306, and N332 are each glycosylated (N-linked (GlcNAc...) asparagine). Cysteines 327 and 341 form a disulfide.

Belongs to the peptidase S1 family. As to quaternary structure, interacts with SERPINA10. The iron and 2-oxoglutarate dependent 3-hydroxylation of aspartate and asparagine is (R) stereospecific within EGF domains. As to expression, plasma.

Its subcellular location is the secreted. Appears to assist hemostasis by binding thrombin and promoting its association with phospholipid vesicles. Inhibits activity of the coagulation protease factor Xa in the presence of SERPINA10, calcium and phospholipids. In Homo sapiens (Human), this protein is Vitamin K-dependent protein Z (PROZ).